Reading from the N-terminus, the 114-residue chain is Ribosome-binding factor A (114 aa).

Belongs to the RbfA family. As to quaternary structure, monomer. Binds 30S ribosomal subunits, but not 50S ribosomal subunits or 70S ribosomes.

Its subcellular location is the cytoplasm. In terms of biological role, one of several proteins that assist in the late maturation steps of the functional core of the 30S ribosomal subunit. Associates with free 30S ribosomal subunits (but not with 30S subunits that are part of 70S ribosomes or polysomes). Required for efficient processing of 16S rRNA. May interact with the 5'-terminal helix region of 16S rRNA. The chain is Ribosome-binding factor A from Phytoplasma mali (strain AT).